The chain runs to 276 residues: Transcriptional antiactivator ExsD (276 aa).

In terms of assembly, can form homotrimer. Interacts with ExsA; this interaction inhibits ExsA activity. Interacts with ExsC; this interaction dissociates the ExsD-ExsA complex.

Functionally, negative regulator of the type III secretion system regulon. Acts by disrupting transcriptional activator ExsA self-association and DNA-binding activity in absence of inducing signals. Upon host cell contact, this interaction is disrupted by the anti-antiactivator protein ExsC leading to ExsA activation. This is Transcriptional antiactivator ExsD (exsD) from Pseudomonas aeruginosa (strain ATCC 15692 / DSM 22644 / CIP 104116 / JCM 14847 / LMG 12228 / 1C / PRS 101 / PAO1).